The primary structure comprises 187 residues: dCTP deaminase, dUMP-forming (187 aa).

DCTP contacts are provided by residues 99 to 104 (KSSIAR), D117, 125 to 127 (TLE), Q146, Y159, K166, and Q170. E127 functions as the Proton donor/acceptor in the catalytic mechanism.

The protein belongs to the dCTP deaminase family. As to quaternary structure, homotrimer.

The enzyme catalyses dCTP + 2 H2O = dUMP + NH4(+) + diphosphate. It participates in pyrimidine metabolism; dUMP biosynthesis; dUMP from dCTP: step 1/1. Functionally, bifunctional enzyme that catalyzes both the deamination of dCTP to dUTP and the hydrolysis of dUTP to dUMP without releasing the toxic dUTP intermediate. This is dCTP deaminase, dUMP-forming from Methanoculleus marisnigri (strain ATCC 35101 / DSM 1498 / JR1).